A 201-amino-acid polypeptide reads, in one-letter code: MLLSDRDITAELDAGRVALDPYDPGMLQPASIDVRIDRFFRLFDNHKYPYIDPAEDQPELTRLIESKPGEPFILHPGEFVLGSTFELVTLPDDVAARLEGKSSLGRLGLLTHSTAGFIDPGFSGHVTLELSNVATLPIKLWPGMKIGQLCFFRLSSPAKKPYGSGEYASRYQGQRGPTASRSHLNFVHTDVTVTDAGQQGE.

DCTP-binding positions include 101 to 106, Asp119, 127 to 129, Gln148, Tyr162, and Gln174; these read KSSLGR and TLE. Residue Glu129 is the Proton donor/acceptor of the active site.

The protein belongs to the dCTP deaminase family. Homotrimer.

It carries out the reaction dCTP + 2 H2O = dUMP + NH4(+) + diphosphate. It functions in the pathway pyrimidine metabolism; dUMP biosynthesis; dUMP from dCTP: step 1/1. Bifunctional enzyme that catalyzes both the deamination of dCTP to dUTP and the hydrolysis of dUTP to dUMP without releasing the toxic dUTP intermediate. In Clavibacter michiganensis subsp. michiganensis (strain NCPPB 382), this protein is dCTP deaminase, dUMP-forming.